The chain runs to 265 residues: Asparagine-rich protein (265 aa).

A signal peptide spans 1 to 21 (MSRLTLLVLLVIAAVIQKVHG). 2 disordered regions span residues 20 to 71 (HGQG…NRNI) and 88 to 183 (SNQN…NQQY). Basic and acidic residues-rich tracts occupy residues 22–35 (QGRENEKKNEHEPG) and 44–55 (EKTERNLREPNR). Low complexity predominate over residues 88-98 (SNQNNFGNNRS). Positions 115–124 (NKSEVEKENG) are enriched in basic and acidic residues. Residues 152-166 (KVQHRIAKRFQKRHP) show a composition bias toward basic residues.

Nacreous layer of shell (at protein level). Expressed primarily in the mantle with highest level in the mantle pallium and lower level in the mantle edge.

It localises to the secreted. This Pinctada maxima (Silver-lipped pearl oyster) protein is Asparagine-rich protein.